Here is a 333-residue protein sequence, read N- to C-terminus: Protein 2 (333 aa).

Disordered stretches follow at residues 1–41 (MTGR…SENA) and 57–84 (LGAG…LPPT). The span at 24-33 (QETTKQTTSA) shows a compositional bias: polar residues. Residues 62 to 79 (DYDETEADPADTYGDTEA) show a composition bias toward acidic residues.

This is Protein 2 from Lactuca sativa (Garden lettuce).